We begin with the raw amino-acid sequence, 381 residues long: GDP-mannose transporter (381 aa).

Topologically, residues 1-40 are cytoplasmic; sequence MADDKKTNDYTVEMDKLDQGSKNFEAPLPPVQPRSAPNAQ. The helical transmembrane segment at 41–61 threads the bilayer; it reads LANNPILPVLAYCGSSIMMTV. Topologically, residues 62-71 are lumenal; the sequence is MNKYVLSGTD. The chain crosses the membrane as a helical span at residues 72-92; sequence FNLNFLLLCVQSIVCIVAIQT. The Cytoplasmic segment spans residues 93-110; sequence CKASKLITYRDFNADEAK. Residues 111–127 form a helical membrane-spanning segment; it reads KWFPITLLLIGMIYTGS. Topologically, residues 128-134 are lumenal; it reads KALQFLS. A helical transmembrane segment spans residues 135–151; it reads IPVYTIFKNLTIILIAY. The Cytoplasmic segment spans residues 152–160; it reads GEVLWFGGS. A helical transmembrane segment spans residues 161–182; sequence VTGLTLFSFGLMVLSSIIAAWA. The Lumenal portion of the chain corresponds to 183–200; that stretch reads DIKHAVESSGDATAKVST. A helical transmembrane segment spans residues 201–221; that stretch reads LNAGYIWMLINCLCTSSYVLG. Residues 222-233 are Cytoplasmic-facing; the sequence is MRKRIKLTNFKD. Residues 234 to 254 traverse the membrane as a helical segment; that stretch reads FDTMFYNNLLSIPVLLVLTFL. The Lumenal segment spans residues 255 to 274; that stretch reads MEDWSSANITRNFPPADRNG. N-linked (GlcNAc...) asparagine glycosylation occurs at asparagine 262. A helical transmembrane segment spans residues 275-295; sequence IMFAMILSGLSSVFISYTSAW. At 296–303 the chain is on the cytoplasmic side; the sequence is CVRVTSST. The helical transmembrane segment at 304 to 324 threads the bilayer; the sequence is TYSMVGALNKLPIAVSGLIFF. Residues 325-327 lie on the Lumenal side of the membrane; the sequence is DAP. A helical transmembrane segment spans residues 328-348; the sequence is VTFPSVSAIVVGFVSGIVYAV. The Cytoplasmic portion of the chain corresponds to 349–381; sequence AKIKQNAKPKTGVLPTSNPVSASSQSMRDSLRS. A disordered region spans residues 362 to 381; that stretch reads LPTSNPVSASSQSMRDSLRS.

It belongs to the TPT transporter family. SLC35D subfamily. In terms of assembly, homooligomer.

It localises to the golgi apparatus membrane. Its subcellular location is the cytoplasmic vesicle membrane. It is found in the endoplasmic reticulum membrane. Its function is as follows. Involved in the import of GDP-mannose from the cytoplasm into the Golgi lumen. This chain is GDP-mannose transporter (gmt1), found in Aspergillus clavatus (strain ATCC 1007 / CBS 513.65 / DSM 816 / NCTC 3887 / NRRL 1 / QM 1276 / 107).